The chain runs to 247 residues: Ice-binding protein (247 aa).

A signal peptide spans 1-19 (MTFSILSIFVFGLISSSVA). The N-linked (GlcNAc...) asparagine glycan is linked to Asn-219.

It belongs to the ice-binding protein family.

The protein localises to the secreted. Binds ice crystals and most probably inhibits their growth in order to prevent cell damage from extracellular ice. This chain is Ice-binding protein, found in Flammulina populicola (Enokitake mushroom).